The following is a 360-amino-acid chain: Biotin synthase 2 (360 aa).

Positions 53 to 280 (RRVKLNFLVN…TAEVRLSGGR (228 aa)) constitute a Radical SAM core domain. C68, C72, and C75 together coordinate [4Fe-4S] cluster. C112, C145, C205, and R275 together coordinate [2Fe-2S] cluster.

The protein belongs to the radical SAM superfamily. Biotin synthase family. As to quaternary structure, homodimer. [4Fe-4S] cluster is required as a cofactor. Requires [2Fe-2S] cluster as cofactor.

The enzyme catalyses (4R,5S)-dethiobiotin + (sulfur carrier)-SH + 2 reduced [2Fe-2S]-[ferredoxin] + 2 S-adenosyl-L-methionine = (sulfur carrier)-H + biotin + 2 5'-deoxyadenosine + 2 L-methionine + 2 oxidized [2Fe-2S]-[ferredoxin]. The protein operates within cofactor biosynthesis; biotin biosynthesis; biotin from 7,8-diaminononanoate: step 2/2. In terms of biological role, catalyzes the conversion of dethiobiotin (DTB) to biotin by the insertion of a sulfur atom into dethiobiotin via a radical-based mechanism. This Frankia casuarinae (strain DSM 45818 / CECT 9043 / HFP020203 / CcI3) protein is Biotin synthase 2.